A 269-amino-acid polypeptide reads, in one-letter code: Diaminopimelate epimerase (269 aa).

Substrate is bound by residues Asn13, Gln46, and Asn65. Cys74 serves as the catalytic Proton donor. Substrate contacts are provided by residues 75–76, Asn149, Asn182, and 200–201; these read GN and ER. Cys209 serves as the catalytic Proton acceptor. 210 to 211 serves as a coordination point for substrate; the sequence is GT.

Belongs to the diaminopimelate epimerase family. Homodimer.

It is found in the cytoplasm. The catalysed reaction is (2S,6S)-2,6-diaminopimelate = meso-2,6-diaminopimelate. It functions in the pathway amino-acid biosynthesis; L-lysine biosynthesis via DAP pathway; DL-2,6-diaminopimelate from LL-2,6-diaminopimelate: step 1/1. Functionally, catalyzes the stereoinversion of LL-2,6-diaminopimelate (L,L-DAP) to meso-diaminopimelate (meso-DAP), a precursor of L-lysine and an essential component of the bacterial peptidoglycan. In Zymomonas mobilis subsp. mobilis (strain ATCC 31821 / ZM4 / CP4), this protein is Diaminopimelate epimerase.